The following is an 835-amino-acid chain: Telomere length regulation protein TEL2 homolog (835 aa).

2 disordered regions span residues 455–501 (SADC…LAPY) and 629–648 (LSHEVSSESRSTGTGQHSIR). Positions 464–473 (ESSPSKSCPK) are enriched in low complexity. Over residues 474-486 (AIEKSKMEAKADQ) the composition is skewed to basic and acidic residues. Positions 488 to 499 (SDSELDSDDDLA) are enriched in acidic residues. Over residues 636 to 648 (ESRSTGTGQHSIR) the composition is skewed to polar residues.

It belongs to the TEL2 family.

It localises to the cytoplasm. The protein localises to the membrane. The protein resides in the nucleus. It is found in the chromosome. Its subcellular location is the telomere. In terms of biological role, regulator of the DNA damage response (DDR). Part of the TTT complex that is required to stabilize protein levels of the phosphatidylinositol 3-kinase-related protein kinase (PIKK) family proteins. Promotes assembly, stabilizes and maintains the activity of TORC complexes, which regulate cell growth and survival in response to nutrient and hormonal signals. May be involved in telomere length regulation. This Xenopus laevis (African clawed frog) protein is Telomere length regulation protein TEL2 homolog (telo2).